Reading from the N-terminus, the 179-residue chain is Large ribosomal subunit protein uL5 (179 aa).

Belongs to the universal ribosomal protein uL5 family. Part of the 50S ribosomal subunit; contacts the 5S rRNA and probably tRNA. Forms a bridge to the 30S subunit in the 70S ribosome.

Functionally, this is one of the proteins that bind and probably mediate the attachment of the 5S RNA into the large ribosomal subunit, where it forms part of the central protuberance. In the 70S ribosome it contacts protein S13 of the 30S subunit (bridge B1b), connecting the 2 subunits; this bridge is implicated in subunit movement. May contact the P site tRNA; the 5S rRNA and some of its associated proteins might help stabilize positioning of ribosome-bound tRNAs. The chain is Large ribosomal subunit protein uL5 from Pyrobaculum aerophilum (strain ATCC 51768 / DSM 7523 / JCM 9630 / CIP 104966 / NBRC 100827 / IM2).